The following is a 120-amino-acid chain: Large ribosomal subunit protein bL19 (120 aa).

Belongs to the bacterial ribosomal protein bL19 family.

Functionally, this protein is located at the 30S-50S ribosomal subunit interface and may play a role in the structure and function of the aminoacyl-tRNA binding site. This Chlorobium phaeobacteroides (strain DSM 266 / SMG 266 / 2430) protein is Large ribosomal subunit protein bL19.